A 346-amino-acid polypeptide reads, in one-letter code: Glycerol-1-phosphate dehydrogenase [NAD(P)+] (346 aa).

NAD(+)-binding positions include 93-97 (GSIID) and 115-118 (TTAS). A substrate-binding site is contributed by aspartate 120. Serine 124 lines the NAD(+) pocket. A substrate-binding site is contributed by aspartate 167. Residues aspartate 167 and histidine 247 each coordinate Zn(2+). Substrate is bound at residue histidine 251. Histidine 263 contributes to the Zn(2+) binding site.

Belongs to the glycerol-1-phosphate dehydrogenase family. The cofactor is Zn(2+).

The protein resides in the cytoplasm. The enzyme catalyses sn-glycerol 1-phosphate + NAD(+) = dihydroxyacetone phosphate + NADH + H(+). It catalyses the reaction sn-glycerol 1-phosphate + NADP(+) = dihydroxyacetone phosphate + NADPH + H(+). The protein operates within membrane lipid metabolism; glycerophospholipid metabolism. Its function is as follows. Catalyzes the NAD(P)H-dependent reduction of dihydroxyacetonephosphate (DHAP or glycerone phosphate) to glycerol 1-phosphate (G1P). The G1P thus generated is used as the glycerophosphate backbone of phospholipids in the cellular membranes of Archaea. In Pyrococcus abyssi (strain GE5 / Orsay), this protein is Glycerol-1-phosphate dehydrogenase [NAD(P)+].